A 4998-amino-acid polypeptide reads, in one-letter code: MLPLALLFGMLWTQANGHWCEQIETVHVEEEVTPRQEDLVPCTSLYHYSRLGWQLDLSWSGRVGLTRPPALGLCAIYKPPETRPATWNRTVRACCPGWGGAHCTDALAETSPKGHCFVTWHCQPLAGSANSSAGSLEDPADELGVWPLTLNDPILFPGMSLQWQGDWLVLSGGLGVVVRLDRSSSISISVDHEFWGRTQGLCGLYNGRPEDDFVEPGGGLATLAATFGNSWKLPGSEPGCLDAVEVAWGCESLLGGTLTDLEAVKLQAQAQDMCHQLLEGPFWQCHGQVQPDEYHETCLFAYCVGATAGNGPEGQLEAVCATFANYAQACARQHIYVHWRKPGFCERVCPGGQLYSDCVSSCPPSCSAVAQGEEGSCGKECVSGCECPTGLFWDGALCVPAAHCPCYHRRQRYAPGDTVKQQCNPCVCQDGRWHCAQALCPAECAVGGDGHYFTFDGRSFFFRGTPGCHYSLVQDSVKGQLLVVLEHGACDTGSCLHALSVFLGNTHIQLRYSGAVLVDGEDVDLPWIGVEGFNISWASSTFLLLHWPGAWVLWGVAEPAAYITLDPRHAYQVQGLCGTFTWKQQDDFLTPAGDIETSVTAFASKFQVSGDGRCPLVDKSPLFCSSYSQHLTFTEAACAILHGHAFQECHGLVDREPFRLRCLEAVCGCAPGRDCLCPVLSAYTRHCAQEGVLLQWRNETLCPVSCPGGQVYQECAPVCGHHCGEPEDCKELGICVAGCNCPPGLLWDLEGQCVPPSMCHCQFGGHRYTINTTTVRDCSHCICQERGLWNCTAHHCPRQWALCPRELIYVPGACLLTCDSPRANHSCWAGSTDGCVCPPGTVLLDKHCVSPDLCPCRHNGQWYPPNATIQEDCNICVCQGQRWHCTGQRCSGWCQASGAPHYVTFDGLVFTFPGACEYLLVREAGGRFSVSVQNLPCGASGLTCTKALVVRLDSTVVHMLRGQAVTVNGVSIRLPKVYTGPGLSLHHAGLFLLLTTRLGLTLLWDGGTRVLVQLSPHFHGRVAGLCGNFDSDASNDLRSRQGVLEPTAELTAHSWRLNPLCPEPGDLPHPVNAHRANWARARCEVILQPIFAPCHTEVPPQQYYEWCVYDACGCDTGGDCECLCSAIATYADECARHRHHVRWRSQELCPLQCEGGQVYEPCGSTCPPTCHDHHSELRWHCQVITCVEGCFCPEGTLLHGGACMKLAACPCEWQGSFFPPGTVLQKDCGNCTCQGSQWHCDRGGAPCEDMEPGCAEGETLCRENGHCVPLEWLCDNQDDCGDGSDEEGCATSVCGEGQMSCQSGHCLPLSLICDGQDDCGDGTDEQGCLCPHGSLACADGRCLPPALLCNGHPDCLDAADEESCLGPVSCISGEVSCVDGTCVRTIQLCDGVWDCPDGADEGPSHCSLPSLPTPPGGIGQNPSTSSLDTAPSPVGSTSPASPCSLLEFQCNSGECTPRGWRCDQEEDCTDGSDELDCGGPCMLYQVPCAHSPHCVSPGQLCDGVTQCPDGSDEDPDVCEEQSASGGANRTGAPCPEFSCPDGTCIDFLLVCDGNPDCELADETEPSLDEQGCGAWGSWGPWAPCSQTCGSGTRSRNRNCSTSSLQVLQNCPGLQHQSQACFTEACPVDGEWSSWSPWSPCSEPCGGTTTRHRQCRPPQNGGQDCALLPGSTHSTRQTSPCPQEGCLNATCFGELVFRTCAPCPLTCDDISGQAACPPDRPCSSPGCWCPDGKVLNTEGQCVRPRQCPCLVDGAHYWPGQRIKMDCQLCFLDCGWSSWSPWAECLGPCSSQSLQWSFRSPNNPRLSGHGRQCRGIHRKARRCQTEACEGCEQWGLMYNVGERWRGGPCMVCECLHSSITHCSPYCPIGSCPQGWVLVEGMGESCCHCALPEKNQTVIHMTTPAPAPASAPSPQIGAHLVTYVLPPTADACYSPLGLAGLPMWAPSQHWEHITRADPVEAPMAGPGPREGASAEWHTQPLYLQLDLRRPRNLTGIIVQRAGSSAAYVSTLSLQFSSDNLQWHNYVNSLSSTLSPPKPSPESSNHMAPEVWTFDQMVQARYIRVWPHSGHLRDNNQHDIFLWVELLGLSPLAPLCPGSRHRCASGECAPKGGPCDGAVDCDDGSDEEGCGSLHASTTSRTPALSPTQPGKFPREVSEDLRQGAEAMTSHSPPSSGETAGLIPASEGTLPVSGQPMQTLSATSTFPPGAKSLHPGMAAVTVHPPHSVTPGAPVGQTVSPRPFPPMPCGPGQVPCDVLGCVEQEQLCDGREDCLDGSDEQHCASAEPFTVPTTALPGLPASKALCSPSQLRCGSGECLPFEHRCDLQVNCQDGSDEDNCVDCVLAPWSGWSDCSRSCGLGLIFQHRELLRLPLPGGSCLLDQFRSQSCFVQACPVAGAWAEWGPWTACSVSCGGGHQSRQRSCVDPPPKNGGAPCPGPSHEKAPCNLQLCPGDTDCEPGLVHVNAELCQKGLVPPCPPSCLDPEANRSCSGHCMEGCRCPPGLLLQDSHCLPLSECPCLVGQKLIQPRLAFLLDNCSQCICEKGTLLCKPGACSQSCGWSAWSPWTACDRSCGSGVRARFRSPTNPPVAFGGSPCEGDRQELQACYTDCGTEIPGWTPWTSWSSCSQSCLVPGGDPGWRQRSRLCPSSRDTFCPGEATQEEPCSPPVCPVPSAWGLWASWSTCSASCNGGIQTRGRSCSGSAPGNPVCLGPHTQTRDCNMHPCTAQCPGNMVFRSAEQCLEEGGPCPQLCLAQDPGVECTGSCAPSCNCPPGLFLHNASCLPRSQCPCQLHGQLYAPGAVAHLDCNNCTCISGEMVCTSKRCPVACGWSPWTPWSPCSQSCNVGIRRRFRAGTEPPAAFGGAECQGPNLDAEFCSLRPCRGPGAAWSSWTPCSVPCGGGYRNRTQGSGPHSPIEFSTCSLQPCAGPVPGVCPEDQQWLDCAQGPASCAHLSIPGEANQTCHPGCYCLSGMLLLNNVCVPVQDCPCAHRGRLYSPGSAVHLPCENCSCISGLITNCSSWPCEEGQPAWSSWTPWSVCSASCNPARRHRHRFCARPPHRAPFSLVLLTTVAAPTTLCPGPEAEEEPCLLPGCNQAGGWSPWSPWSGCSRSCGGGLRSRTRACDQPSPQGLGDFCEGPQAQGEACQAQPCPVTNCSAMEGAEYSPCGPPCPRSCDDLVHCVWRCQPGCYCPLGKVLSADGAICVKPSYCSCLDLLTGKRHHAGTQLMRPDGCNHCTCMEGRLNCTDLPCQVSGDWCPWSKWTACSQPCRGQTRTRSRACVCPAPQHGGSPCPEESGGTGVQHQMEACPNATACPVDGAWSPWGPWSSCDACLGQSYRSRVCSHPPISDGGKPCLGGYQQSRPCRNSSTLCTDCGGGQDLLPCGQPCPHSCQDLSLGSTCQPGSAGCQSGCGCPPGQLSQDGLCVFPVDCHCHFQPRAMGIPENRSRSVGSTLSSWESLEPGEVVTGPCDNCTCVAGILQCHEVPSCPGPGIWSSWGPWEKCSVSCGGGEQLRSRQCARPPCPGLAQQSRICHIHVCRETGCPAGRLYRECQPSDGCPFSCAHVTGQVACFSERCKEGCHCPEGTFQHHVACVQECPCVLTVLLLQELGLASAALGSYPTLLGDEGKPLGPGVELLPGQMLQTDCGNCSCVHGKLSCSMVECSRVHGSFGPWGMWSLCSRSCGGLGTRTRTRQCVLPTLAPGGLSCRGPLQDLEYCFSPECPGTAGSTVEPVTGLAGGWGPWSPWSPCSHSCTDPAHPAWRSRTRLCLANCTVGDSSQERPCNLPSCAALLPCPGPGCGSGNCFWTSWAPWEPCSRSCGVGQQRRLRAYHPPGPGGHWCPDILTAYQERRFCNLRACPVPGGWSHWSPWSWCDRSCGGGRSLRSRSCSSPPPKNGGTSCVGERHHVRPCNPMPCEEGCPAGMEMVSCANHCPYSCSDLQEGGMCQEDQACQLGCRCSEGFLEQDGGCVPVGHCECTDAQGRSWAPGSQHQDACNNCSCQAGQLSCTAQLCSPPAHCAWSHWSAWSSCSHSCGPQGQQSRFRSSTSGSWALECQKEQSQSQPCPEVPCPPLCLHEAHLHELGDNWLHGECQQCSCTPEGAICKDTDCAVPRGWTLWSSWSYCSVSCGGGSQVRTRSCTVSAPPHGSLSCEGPDTQTRHCGQQLCLQKLERCSWGPWGPCSRSCGTGLASRSGSCPCLLTKEDSKCNDTFLGLDTQACYSGPCQDDCTWGDWSSWTRCSCKVLVQQRYRHQVPAPGQAGEGTPCTRLDGHFRPCTIGNCSEDSCPPPFEFQSCGSPCAGLCATHLNHRLCQDLPPCQPGCYCPKGLLEQAGSCILPEQCNCWHISGEGARVTLAPGDRLQLGCKECVCRRGELQCSSQGCEGLLPLTGWSEWSPCGPCLPQSALAPASRTALEGHWPLNTSDLPPPSVTLLASEQYRHRLCLDPETRRPWAGDPALCTVPLSQQRLCPDPGACNDTCQWGPWGPWSPCQMPCSGGFKLRWRVARDTSAGECPGPWAQTESCNMGSCPGESCETRDTVFTLDCANQCPRSCADLWDGVQCLQGPCSPGCRCPPGQLVQDGHCVPISSCRCGLPSANASWELAPTQVVQLDCHNCTCINGTLMCPHLECPVLGPWSAWSECSAVCGKGTMVRHRSCEEHPDREPCQALDLQQWQECNLQACPECPPGQVLSTCATMCPSLCSHLWPGTICVREPCQLGCGCPGGQLLYNGTCIPPEACPCTQFSLPWGLTLPLEEQARELPSGTVLTRNCTHCTCQGGAFICSLTDCQECAPGEIWQHGKLGPCEKTCPEMNMTQAWSNCTEAQAPGCVCQLGYFRSQTGLCVPEDHCECWHHGSPHLPGSEWQEACESCRCLHGKSVCIRHCPELSCAQGEVIMQEPGSCCPICQQDTLKEEPVSCRYLTELRNLTKGPCHLDQIEVSYCSGHCRSSTNVMTEEPYLQSQCDCCSYRLDPDSPVRILNLLCPDGHTEPVVLPVIHSCQCSACQGGDFSKH.

An N-terminal signal peptide occupies residues 1–17; it reads MLPLALLFGMLWTQANG. One can recognise an EMI domain in the interval 18–102; that stretch reads HWCEQIETVH…ACCPGWGGAH (85 aa). The 170-residue stretch at 72-241 folds into the VWFD 1 domain; that stretch reads GLCAIYKPPE…KLPGSEPGCL (170 aa). 2 disulfides stabilise this stretch: C74–C202 and C103–C240. N-linked (GlcNAc...) asparagine glycosylation is found at N88 and N130. The TIL 1 domain occupies 349–404; that stretch reads CPGGQLYSDCVSSCPPSCSAVAQGEEGSCGKECVSGCECPTGLFWDGALCVPAAHC. The VWFC 1 domain occupies 404-496; that stretch reads CPCYHRRQRY…HGACDTGSCL (93 aa). The VWFD 2 domain occupies 442–615; it reads AECAVGGDGH…FQVSGDGRCP (174 aa). 2 disulfide bridges follow: C444–C577 and C468–C614. N-linked (GlcNAc...) asparagine glycans are attached at residues N534 and N698. One can recognise a TIL 2 domain in the interval 706 to 759; the sequence is CPGGQVYQECAPVCGHHCGEPEDCKELGICVAGCNCPPGLLWDLEGQCVPPSMC. N-linked (GlcNAc...) asparagine glycosylation is found at N771, N790, N824, and N866. Positions 892–1062 constitute a VWFD 3 domain; it reads GWCQASGAPH…HSWRLNPLCP (171 aa). Intrachain disulfides connect C894–C1026, C916–C1061, and C937–C944. The TIL 3 domain occupies 1153–1209; sequence CEGGQVYEPCGSTCPPTCHDHHSELRWHCQVITCVEGCFCPEGTLLHGGACMKLAAC. N1230 carries N-linked (GlcNAc...) asparagine glycosylation. 4 LDL-receptor class A domains span residues 1253–1290, 1293–1328, 1329–1365, and 1369–1407; these read GCAE…EGCA, VCGE…EQGC, LCPH…ESCL, and SCIS…SHCS. 12 cysteine pairs are disulfide-bonded: C1254/C1267, C1261/C1280, C1274/C1289, C1294/C1306, C1301/C1319, C1313/C1328, C1330/C1342, C1337/C1355, C1349/C1364, C1370/C1382, C1377/C1395, and C1389/C1406. The disordered stretch occupies residues 1406–1440; the sequence is CSLPSLPTPPGGIGQNPSTSSLDTAPSPVGSTSPA. Polar residues predominate over residues 1420-1440; it reads QNPSTSSLDTAPSPVGSTSPA. LDL-receptor class A domains are found at residues 1442 to 1478 and 1480 to 1519; these read PCSL…LDCG and PCML…DVCE. 6 cysteine pairs are disulfide-bonded: C1443–C1455, C1450–C1468, C1462–C1477, C1481–C1494, C1488–C1507, and C1501–C1518. N1528 is a glycosylation site (N-linked (GlcNAc...) asparagine). An LDL-receptor class A 7 domain is found at 1533–1571; sequence PCPEFSCPDGTCIDFLLVCDGNPDCELADETEPSLDEQG. 9 disulfide bridges follow: C1534–C1544, C1539–C1557, C1551–C1572, C1584–C1620, C1588–C1625, C1599–C1610, C1640–C1680, C1644–C1685, and C1654–C1664. 2 consecutive TSP type-1 domains span residues 1572 to 1626 and 1628 to 1686; these read CGAW…EACP and DGEW…EGCL. The N-linked (GlcNAc...) asparagine glycan is linked to N1598. An N-linked (GlcNAc...) asparagine glycan is attached at N1687. Residues 1692 to 1746 enclose the TIL 4 domain; that stretch reads GELVFRTCAPCPLTCDDISGQAACPPDRPCSSPGCWCPDGKVLNTEGQCVRPRQC. EGF-like domains lie at 1702–1741 and 1742–1768; these read CPLT…GQCV and RPRQ…CQLC. Residues 1771 to 1827 enclose the TSP type-1 3 domain; the sequence is DCGWSSWSPWAECLGPCSSQSLQWSFRSPNNPRLSGHGRQCRGIHRKARRCQTEACE. Intrachain disulfides connect C1772–C1811, C1783–C1787, and C1821–C1826. Residues 1827 to 1887 enclose the VWFC 2 domain; that stretch reads EGCEQWGLMY…GMGESCCHCA (61 aa). N-linked (GlcNAc...) asparagine glycosylation is found at N1892 and N1989. In terms of domain architecture, F5/8 type C spans 1929–2085; sequence CYSPLGLAGL…IFLWVELLGL (157 aa). The LDL-receptor class A 8 domain occupies 2091-2127; the sequence is LCPGSRHRCASGECAPKGGPCDGAVDCDDGSDEEGCG. Intrachain disulfides connect C2092–C2104, C2099–C2117, and C2111–C2126. Positions 2119–2209 are disordered; it reads DGSDEEGCGS…TFPPGAKSLH (91 aa). A compositionally biased stretch (polar residues) spans 2130–2144; that stretch reads HASTTSRTPALSPTQ. Over residues 2148–2158 the composition is skewed to basic and acidic residues; sequence FPREVSEDLRQ. Polar residues-rich tracts occupy residues 2164-2173 and 2190-2201; these read TSHSPPSSGE and QPMQTLSATSTF. 2 LDL-receptor class A domains span residues 2242–2278 and 2299–2335; these read PCGP…QHCA and LCSP…DNCV. 12 disulfide bridges follow: C2243-C2255, C2250-C2268, C2262-C2277, C2300-C2312, C2307-C2325, C2319-C2334, C2337-C2373, C2348-C2352, C2383-C2388, C2403-C2440, C2407-C2445, and C2418-C2430. TSP type-1 domains are found at residues 2336–2389 and 2391–2446; these read DCVL…QACP and AGAW…QLCP. Residues 2468–2511 enclose the TIL 5 domain; sequence VPPCPPSCLDPEANRSCSGHCMEGCRCPPGLLLQDSHCLPLSEC. Residues N2481 and N2530 are each glycosylated (N-linked (GlcNAc...) asparagine). TSP type-1 domains are found at residues 2551 to 2605, 2609 to 2664, and 2666 to 2719; these read SCGW…TDCG, PGWT…PVCP, and PSAW…HPCT. Disulfide bonds link C2552/C2590, C2563/C2567, C2600/C2604, C2620/C2658, C2624/C2663, C2640/C2648, C2678/C2713, C2682/C2718, and C2693/C2703. N2772 and N2802 each carry an N-linked (GlcNAc...) asparagine glycan. 2 TSP type-1 domains span residues 2820–2875 and 2876–2919; these read ACGW…RPCR and GPGA…QPCA. 3 disulfide bridges follow: C2821/C2859, C2832/C2836, and C2869/C2874. N-linked (GlcNAc...) asparagine glycans are attached at residues N2897, N2952, N2999, and N3009. The 53-residue stretch at 2926 to 2978 folds into the TIL 6 domain; sequence CPEDQQWLDCAQGPASCAHLSIPGEANQTCHPGCYCLSGMLLLNNVCVPVQDC. 2 TSP type-1 domains span residues 3019–3086 and 3088–3143; these read QPAW…PGCN and AGGW…QPCP. 6 disulfide bridges follow: C3031-C3080, C3035-C3085, C3046-C3070, C3100-C3137, C3104-C3142, and C3115-C3127. N-linked (GlcNAc...) asparagine glycosylation is present at N3146. The TIL 7 domain maps to 3151 to 3201; sequence EGAEYSPCGPPCPRSCDDLVHCVWRCQPGCYCPLGKVLSADGAICVKPSYC. N3235 is a glycosylation site (N-linked (GlcNAc...) asparagine). 2 consecutive TSP type-1 domains span residues 3244–3306 and 3308–3363; these read SGDW…TACP and DGAW…TLCT. 6 disulfides stabilise this stretch: C3256–C3299, C3260–C3305, C3271–C3283, C3320–C3355, C3323–C3362, and C3333–C3345. N-linked (GlcNAc...) asparagine glycosylation is present at N3301. N-linked (GlcNAc...) asparagine glycosylation occurs at N3357. The region spanning 3365 to 3421 is the TIL 8 domain; sequence CGGGQDLLPCGQPCPHSCQDLSLGSTCQPGSAGCQSGCGCPPGQLSQDGLCVFPVDC. N3435 and N3462 each carry an N-linked (GlcNAc...) asparagine glycan. The TSP type-1 15 domain occupies 3481 to 3529; that stretch reads PGIWSSWGPWEKCSVSCGGGEQLRSRQCARPPCPGLAQQSRICHIHVCR. 3 disulfides stabilise this stretch: C3493–C3523, C3497–C3528, and C3508–C3513. A glycan (N-linked (GlcNAc...) asparagine) is linked at N3638. 4 consecutive TSP type-1 domains span residues 3657–3713, 3727–3779, 3793–3849, and 3851–3906; these read HGSF…PECP, AGGW…PSCA, NCFW…RACP, and PGGW…MPCE. 3 disulfide bridges follow: C3669-C3707, C3673-C3712, and C3685-C3697. Residue N3761 is glycosylated (N-linked (GlcNAc...) asparagine). Cystine bridges form between C3794-C3830, C3805-C3809, C3843-C3848, C3863-C3900, C3867-C3905, and C3878-C3890. The TIL 9 domain maps to 3909–3964; sequence CPAGMEMVSCANHCPYSCSDLQEGGMCQEDQACQLGCRCSEGFLEQDGGCVPVGHC. N3986 carries N-linked (GlcNAc...) asparagine glycosylation. TSP type-1 domains follow at residues 4006 to 4059, 4100 to 4155, 4157 to 4213, and 4215 to 4269; these read HCAW…VPCP, PRGW…QLCL, KLER…GPCQ, and DCTW…GNCS. Disulfide bonds link C4007–C4043, C4018–C4022, C4053–C4058, C4112–C4149, C4116–C4154, C4127–C4139, C4169–C4207, C4173–C4212, C4184–C4195, C4216–C4253, C4227–C4229, and C4263–C4268. N-linked (GlcNAc...) asparagine glycosylation occurs at N4196. Residue N4267 is glycosylated (N-linked (GlcNAc...) asparagine). Residues 4273–4328 form the TIL 10 domain; that stretch reads CPPPFEFQSCGSPCAGLCATHLNHRLCQDLPPCQPGCYCPKGLLEQAGSCILPEQC. N4408 and N4463 each carry an N-linked (GlcNAc...) asparagine glycan. In terms of domain architecture, TSP type-1 24 spans 4465–4516; the sequence is TCQWGPWGPWSPCQMPCSGGFKLRWRVARDTSAGECPGPWAQTESCNMGSCP. Cystine bridges form between C4466–C4500, C4477–C4481, and C4510–C4515. The region spanning 4530 to 4576 is the TIL 11 domain; it reads DCANQCPRSCADLWDGVQCLQGPCSPGCRCPPGQLVQDGHCVPISSC. N-linked (GlcNAc...) asparagine glycosylation is found at N4584, N4601, and N4606. One can recognise a TSP type-1 25 domain in the interval 4616-4669; that stretch reads CPVLGPWSAWSECSAVCGKGTMVRHRSCEEHPDREPCQALDLQQWQECNLQACP. 3 disulfide bridges follow: C4628–C4663, C4632–C4668, and C4643–C4652. One can recognise a TIL 12 domain in the interval 4671–4725; that stretch reads CPPGQVLSTCATMCPSLCSHLWPGTICVREPCQLGCGCPGGQLLYNGTCIPPEAC. N-linked (GlcNAc...) asparagine glycosylation is found at N4716, N4756, N4799, and N4806. Residues 4777-4835 form the TIL 13 domain; the sequence is CAPGEIWQHGKLGPCEKTCPEMNMTQAWSNCTEAQAPGCVCQLGYFRSQTGLCVPEDHC. Residues 4835–4893 enclose the VWFC 3 domain; that stretch reads CECWHHGSPHLPGSEWQEACESCRCLHGKSVCIRHCPELSCAQGEVIMQEPGSCCPICQ. 4 cysteine pairs are disulfide-bonded: C4892/C4952, C4918/C4969, C4928/C4985, and C4932/C4987. One can recognise a CTCK domain in the interval 4892 to 4991; the sequence is CQQDTLKEEP…IHSCQCSACQ (100 aa). The N-linked (GlcNAc...) asparagine glycan is linked to N4912.

Belongs to the thrombospondin family. In terms of tissue distribution, subcommissural organ.

The protein localises to the secreted. It is found in the extracellular space. Its function is as follows. Involved in the modulation of neuronal aggregation. May be involved in developmental events during the formation of the central nervous system. The protein is SCO-spondin of Mus musculus (Mouse).